The sequence spans 438 residues: UDP-N-acetylmuramoylalanine--D-glutamate ligase (438 aa).

An ATP-binding site is contributed by 112-118; it reads GSNGKST.

The protein belongs to the MurCDEF family.

It localises to the cytoplasm. It carries out the reaction UDP-N-acetyl-alpha-D-muramoyl-L-alanine + D-glutamate + ATP = UDP-N-acetyl-alpha-D-muramoyl-L-alanyl-D-glutamate + ADP + phosphate + H(+). It participates in cell wall biogenesis; peptidoglycan biosynthesis. In terms of biological role, cell wall formation. Catalyzes the addition of glutamate to the nucleotide precursor UDP-N-acetylmuramoyl-L-alanine (UMA). In Salmonella typhi, this protein is UDP-N-acetylmuramoylalanine--D-glutamate ligase.